We begin with the raw amino-acid sequence, 447 residues long: Methylenetetrahydrofolate--tRNA-(uracil-5-)-methyltransferase TrmFO (447 aa).

Residue 13-18 (GAGLAG) participates in FAD binding.

The protein belongs to the MnmG family. TrmFO subfamily. FAD is required as a cofactor.

It localises to the cytoplasm. The catalysed reaction is uridine(54) in tRNA + (6R)-5,10-methylene-5,6,7,8-tetrahydrofolate + NADH + H(+) = 5-methyluridine(54) in tRNA + (6S)-5,6,7,8-tetrahydrofolate + NAD(+). It carries out the reaction uridine(54) in tRNA + (6R)-5,10-methylene-5,6,7,8-tetrahydrofolate + NADPH + H(+) = 5-methyluridine(54) in tRNA + (6S)-5,6,7,8-tetrahydrofolate + NADP(+). Its function is as follows. Catalyzes the folate-dependent formation of 5-methyl-uridine at position 54 (M-5-U54) in all tRNAs. This is Methylenetetrahydrofolate--tRNA-(uracil-5-)-methyltransferase TrmFO from Streptococcus thermophilus (strain ATCC BAA-250 / LMG 18311).